The sequence spans 416 residues: GTPase Obg (416 aa).

Positions 1-157 (MFQDVLVITV…RRLRLELMLI (157 aa)) constitute an Obg domain. Disordered stretches follow at residues 25-44 (EKFVPKGGPDGGDGGRGGSV) and 62-82 (TYKAEDGEHGRGSQQHGRGGE). The segment covering 32-42 (GPDGGDGGRGG) has biased composition (gly residues). Over residues 63–72 (YKAEDGEHGR) the composition is skewed to basic and acidic residues. The OBG-type G domain occupies 158 to 324 (ADVGLVGYPN…LKEALHALVR (167 aa)). GTP contacts are provided by residues 164–171 (GYPNAGKS), 189–193 (FTTLS), 211–214 (DIPG), 277–280 (NKVD), and 305–307 (SAL). Residues Ser-171 and Thr-191 each contribute to the Mg(2+) site. An OCT domain is found at 336 to 414 (PRKEVQAGVE…IGGLEFEYIP (79 aa)).

It belongs to the TRAFAC class OBG-HflX-like GTPase superfamily. OBG GTPase family. In terms of assembly, monomer. Mg(2+) is required as a cofactor.

The protein resides in the cytoplasm. Its function is as follows. An essential GTPase which binds GTP, GDP and possibly (p)ppGpp with moderate affinity, with high nucleotide exchange rates and a fairly low GTP hydrolysis rate. Plays a role in control of the cell cycle, stress response, ribosome biogenesis and in those bacteria that undergo differentiation, in morphogenesis control. The protein is GTPase Obg of Thermus thermophilus (strain ATCC BAA-163 / DSM 7039 / HB27).